The sequence spans 191 residues: Rho-related GTP-binding protein RhoH (191 aa).

11–18 is a GTP binding site; that stretch reads GDSAVGKT. The short motif at 33–41 is the Effector region element; that stretch reads YKPTVYENT. Residue 58–62 participates in GTP binding; it reads DTAGN. The interval 73 to 86 is interaction with ZAP70; it reads YQQADVVLMCYSVA. 116–119 lines the GTP pocket; that stretch reads TQTD. The residue at position 188 (C188) is a Cysteine methyl ester. Residue C188 is the site of S-geranylgeranyl cysteine attachment. Positions 189–191 are cleaved as a propeptide — removed in mature form; it reads KIL.

This sequence belongs to the small GTPase superfamily. Rho family. In terms of assembly, interacts with GDI1 and GDI2. Interacts with ZAP70 (via SH2 domains) and the interaction is enhanced by its phosphorylation by LCK. Interacts with SYK and the interaction is enhanced by its phosphorylation by FYN. Post-translationally, phosphorylated on tyrosine by LCK. Phosphorylated by FYN. Phosphorylation enhances the interactions with ZAP70 and SYK and is critical for its function in thymocyte development.

The protein localises to the cytoplasm. The protein resides in the cell membrane. Binds GTP but lacks intrinsic GTPase activity and is resistant to Rho-specific GTPase-activating proteins. Inhibits the activation of NF-kappa-B by TNF and IKKB and the activation of CRK/p38 by TNF. Inhibits activities of RAC1, RHOA and CDC42. Negatively regulates leukotriene production in neutrophils. Negative regulator of hematopoietic progenitor cell proliferation, survival and migration. Critical regulator of thymocyte development and T-cell antigen receptor (TCR) signaling by mediating recruitment and activation of ZAP70. Required for phosphorylation of CD3Z, membrane translocation of ZAP70 and subsequent activation of the ZAP70-mediated pathways. Essential for efficient beta-selection and positive selection by promoting the ZAP70-dependent phosphorylation of the LAT signalosome during pre-TCR and TCR signaling. Crucial for thymocyte maturation during DN3 to DN4 transition and during positive selection. Plays critical roles in mast cell function by facilitating phosphorylation of SYK in Fc epsilon RI-mediated signal transduction. Essential for the phosphorylation of LAT, LCP2, PLCG1 and PLCG2 and for Ca(2+) mobilization in mast cells. The protein is Rho-related GTP-binding protein RhoH (RHOH) of Bos taurus (Bovine).